The chain runs to 273 residues: Formamidopyrimidine-DNA glycosylase (273 aa).

Catalysis depends on proline 2, which acts as the Schiff-base intermediate with DNA. Residue glutamate 3 is the Proton donor of the active site. Lysine 60 serves as the catalytic Proton donor; for beta-elimination activity. Histidine 94, arginine 113, and lysine 154 together coordinate DNA. The FPG-type zinc-finger motif lies at 239–273 (EAYGRTGEPCRRCGTPIERIVVAQRSTHICPVCQA). Arginine 263 functions as the Proton donor; for delta-elimination activity in the catalytic mechanism.

Belongs to the FPG family. In terms of assembly, monomer. It depends on Zn(2+) as a cofactor.

The enzyme catalyses Hydrolysis of DNA containing ring-opened 7-methylguanine residues, releasing 2,6-diamino-4-hydroxy-5-(N-methyl)formamidopyrimidine.. The catalysed reaction is 2'-deoxyribonucleotide-(2'-deoxyribose 5'-phosphate)-2'-deoxyribonucleotide-DNA = a 3'-end 2'-deoxyribonucleotide-(2,3-dehydro-2,3-deoxyribose 5'-phosphate)-DNA + a 5'-end 5'-phospho-2'-deoxyribonucleoside-DNA + H(+). In terms of biological role, involved in base excision repair of DNA damaged by oxidation or by mutagenic agents. Acts as a DNA glycosylase that recognizes and removes damaged bases. Has a preference for oxidized purines, such as 7,8-dihydro-8-oxoguanine (8-oxoG). Has AP (apurinic/apyrimidinic) lyase activity and introduces nicks in the DNA strand. Cleaves the DNA backbone by beta-delta elimination to generate a single-strand break at the site of the removed base with both 3'- and 5'-phosphates. In Herpetosiphon aurantiacus (strain ATCC 23779 / DSM 785 / 114-95), this protein is Formamidopyrimidine-DNA glycosylase.